The following is a 381-amino-acid chain: 4-hydroxy-3-methylbut-2-en-1-yl diphosphate synthase (flavodoxin) (381 aa).

[4Fe-4S] cluster contacts are provided by Cys-280, Cys-283, Cys-315, and Glu-322.

It belongs to the IspG family. The cofactor is [4Fe-4S] cluster.

It carries out the reaction (2E)-4-hydroxy-3-methylbut-2-enyl diphosphate + oxidized [flavodoxin] + H2O + 2 H(+) = 2-C-methyl-D-erythritol 2,4-cyclic diphosphate + reduced [flavodoxin]. The protein operates within isoprenoid biosynthesis; isopentenyl diphosphate biosynthesis via DXP pathway; isopentenyl diphosphate from 1-deoxy-D-xylulose 5-phosphate: step 5/6. In terms of biological role, converts 2C-methyl-D-erythritol 2,4-cyclodiphosphate (ME-2,4cPP) into 1-hydroxy-2-methyl-2-(E)-butenyl 4-diphosphate. The sequence is that of 4-hydroxy-3-methylbut-2-en-1-yl diphosphate synthase (flavodoxin) from Clavibacter michiganensis subsp. michiganensis (strain NCPPB 382).